The primary structure comprises 228 residues: Woronin body membrane protein wscA (228 aa).

A run of 4 helical transmembrane segments spans residues 89-109 (MTLY…GILQ), 130-150 (LIVS…IAGA), 162-182 (AGFM…LAFA), and 185-205 (FLPE…IGTY).

Belongs to the peroxisomal membrane protein PXMP2/4 family. Self-assembles into detergent-resistant oligomers and forms a complex with hexA assemblies.

It is found in the peroxisome membrane. It localises to the cell septum. Woronin sorting complex protein involved in both Woronin bodies (WB) formation and inherence. Localizes to large peroxisome membranes where it self-assembles into detergent-resistant oligomers that envelop hex-1 assemblies, producing asymmetrical nascent WBs. These structures are then delivered to the cell cortex, which permits partitioning of the nascent WB and WB inheritance. The polypeptide is Woronin body membrane protein wscA (Aspergillus fumigatus (strain ATCC MYA-4609 / CBS 101355 / FGSC A1100 / Af293) (Neosartorya fumigata)).